We begin with the raw amino-acid sequence, 233 residues long: Large ribosomal subunit protein uL1 (233 aa).

Belongs to the universal ribosomal protein uL1 family. In terms of assembly, part of the 50S ribosomal subunit.

In terms of biological role, binds directly to 23S rRNA. The L1 stalk is quite mobile in the ribosome, and is involved in E site tRNA release. Protein L1 is also a translational repressor protein, it controls the translation of the L11 operon by binding to its mRNA. The polypeptide is Large ribosomal subunit protein uL1 (Psychrobacter arcticus (strain DSM 17307 / VKM B-2377 / 273-4)).